Consider the following 220-residue polypeptide: Splicing factor U2AF 26 kDa subunit (220 aa).

Position 2 is an N-acetylalanine (Ala2). A C3H1-type 1 zinc finger spans residues 12–40 (EKDKVNCSFYFKIGACRHGDRCSRLHNKP). One can recognise an RRM domain in the interval 65–147 (SHCHVSDVEV…QAVHAELSPV (83 aa)). A C3H1-type 2 zinc finger spans residues 149-176 (DFRESCCRQYEMGECTRGGFCNFMHLRP). Positions 186 to 220 (YGRGPRHRSPPRSHTGHRPRERNRRRSPDHRHGRF) are disordered. A compositionally biased stretch (basic residues) spans 189–220 (GPRHRSPPRSHTGHRPRERNRRRSPDHRHGRF).

Belongs to the splicing factor SR family. Interacts with GFI1, U2AF2 and C1QBP. Isoform 3 interacts with PER1. In terms of processing, isoform 3 is rapidly degraded by a proteasome-mediated degradation pathway. As to expression, ubiquitous. Highly expressed in the brain.

The protein resides in the nucleus. The protein localises to the nucleus speckle. It localises to the cytoplasm. In terms of biological role, RNA-binding protein that function as a pre-mRNA splicing factor. Plays a critical role in both constitutive and enhancer-dependent splicing by mediating protein-protein interactions and protein-RNA interactions required for accurate 3'-splice site selection. It can functionally substitute for U2AF1 in constitutive splicing and enhancer-dependent splicing. Acts by enhancing the binding of U2AF2 to weak pyrimidine tracts. Also participates in the regulation of alternative pre-mRNA splicing. Activates exon 5 skipping of PTPRC during T-cell activation; an event reversed by GFI1. Binds to RNA at the AG dinucleotide at the 3'-splice site. Shows a preference for AGC or AGA. Alternative splicing of U2AF1L4 may play a role in connecting the circadian rhythm to changing external cues: may provide a circadian buffering system in central and periphery clocks that allows synchronized adaption to clock-resetting stimuli in order to prevent potentially pathogenic desynchronization. The polypeptide is Splicing factor U2AF 26 kDa subunit (U2af1l4) (Mus musculus (Mouse)).